The sequence spans 1041 residues: Integrator complex subunit 3 (1041 aa).

M1 is modified (N-acetylmethionine). 3 positions are modified to phosphoserine: S500, S535, and S993. The disordered stretch occupies residues 975–1041; it reads YEDSSTKPPK…GSSAVGSDSD (67 aa). The span at 1006–1020 shows a compositional bias: acidic residues; sequence AEEESGSSSASEEED.

Belongs to the Integrator subunit 3 family. Component of the Integrator complex, composed of core subunits INTS1, INTS2, INTS3, INTS4, INTS5, INTS6, INTS7, INTS8, INTS9/RC74, INTS10, INTS11/CPSF3L, INTS12, INTS13, INTS14 and INTS15. The core complex associates with protein phosphatase 2A subunits PPP2CA and PPP2R1A, to form the Integrator-PP2A (INTAC) complex. Component of the SOSS complex, composed of SOSS-B (SOSS-B1/NABP2 or SOSS-B2/NABP1), SOSS-A/INTS3 and SOSS-C/INIP. SOSS complexes containing SOSS-B1/NABP2 are more abundant than complexes containing SOSS-B2/NABP1. Interacts with SOSS-B1/NABP2, SOSS-B2/NABP1 and SOSS-C/INIP; the interaction is direct. Interacts with NBN/NBS1.

It is found in the nucleus. The protein localises to the cytoplasm. Component of the integrator complex, a multiprotein complex that terminates RNA polymerase II (Pol II) transcription in the promoter-proximal region of genes. The integrator complex provides a quality checkpoint during transcription elongation by driving premature transcription termination of transcripts that are unfavorably configured for transcriptional elongation: the complex terminates transcription by (1) catalyzing dephosphorylation of the C-terminal domain (CTD) of Pol II subunit POLR2A/RPB1 and SUPT5H/SPT5, (2) degrading the exiting nascent RNA transcript via endonuclease activity and (3) promoting the release of Pol II from bound DNA. The integrator complex is also involved in terminating the synthesis of non-coding Pol II transcripts, such as enhancer RNAs (eRNAs), small nuclear RNAs (snRNAs), telomerase RNAs and long non-coding RNAs (lncRNAs). Within the integrator complex, INTS3 is involved in the post-termination step: INTS3 binds INTS7 in the open conformation of integrator complex and prevents the rebinding of Pol II to the integrator after termination cycle. Mediates recruitment of cytoplasmic dynein to the nuclear envelope, probably as component of the integrator complex. In terms of biological role, component of the SOSS complex, a multiprotein complex that functions downstream of the MRN complex to promote DNA repair and G2/M checkpoint. The SOSS complex associates with single-stranded DNA at DNA lesions and influences diverse endpoints in the cellular DNA damage response including cell-cycle checkpoint activation, recombinational repair and maintenance of genomic stability. The SOSS complex is required for efficient homologous recombination-dependent repair of double-strand breaks (DSBs) and ATM-dependent signaling pathways. In the SOSS complex, it is required for the assembly of the complex and for stabilization of the complex at DNA damage sites. In Mus musculus (Mouse), this protein is Integrator complex subunit 3 (Ints3).